Here is an 818-residue protein sequence, read N- to C-terminus: Phosphoenolpyruvate synthase (818 aa).

Histidine 442 functions as the Tele-phosphohistidine intermediate in the catalytic mechanism. 7 residues coordinate substrate: arginine 532, arginine 601, glutamate 703, glycine 724, serine 725, asparagine 726, and aspartate 727. Glutamate 703 is a binding site for Mg(2+). Aspartate 727 provides a ligand contact to Mg(2+). The active-site Proton donor is the cysteine 774.

This sequence belongs to the PEP-utilizing enzyme family. It depends on Mg(2+) as a cofactor.

It catalyses the reaction pyruvate + ATP + H2O = phosphoenolpyruvate + AMP + phosphate + 2 H(+). It participates in carbohydrate biosynthesis; gluconeogenesis. Its function is as follows. Catalyzes the phosphorylation of pyruvate to phosphoenolpyruvate. This Synechocystis sp. (strain ATCC 27184 / PCC 6803 / Kazusa) protein is Phosphoenolpyruvate synthase (ppsA).